A 630-amino-acid polypeptide reads, in one-letter code: GATA-type transcription factor SRE1 (630 aa).

2 disordered regions span residues 1–139 and 162–203; these read MTGL…TPLW and DRPT…RLTD. 3 stretches are compositionally biased toward polar residues: residues 66–82, 115–133, and 175–196; these read DNTQ…QLQN, KAQS…NCGT, and YGSS…TNDG. The segment at 128 to 152 adopts a GATA-type 1 zinc-finger fold; it reads CSNCGTKRTPLWRRSPTGATICNAC. The cystein-rich region (CRR) stretch occupies residues 219 to 237; sequence CPGGGSCNGTGGAEGCDGC. The tract at residues 256-283 is disordered; that stretch reads HTPRTSPQVSTQGGPGSTEGDAGSSNPE. Residues 258 to 267 show a composition bias toward polar residues; sequence PRTSPQVSTQ. A GATA-type 2 zinc finger spans residues 291–315; it reads CQNCQTTVTPLWRRDENGHPICNAC. The interval 339 to 609 is disordered; that stretch reads KRVVPAMREQ…AKAERRARLQ (271 aa). Residues 349–363 are compositionally biased toward polar residues; sequence SPPSATQSSNGSVSP. Composition is skewed to low complexity over residues 436–447 and 492–503; these read NNHNNGETTNTH and SSSSASFPNNNP. The span at 504 to 513 shows a compositional bias: polar residues; it reads GRFNSISSLL. Residues 558-568 show a composition bias toward low complexity; sequence SHSPPRFSPSL. The span at 595–609 shows a compositional bias: basic and acidic residues; sequence VDHRDAKAERRARLQ. A coiled-coil region spans residues 595-630; the sequence is VDHRDAKAERRARLQREAQDMREALKAKERELALLE.

It localises to the nucleus. Functionally, GATA-type transcription repressor that regulates iron- acquisition genes through specific binding the GATA sequence element 5'-(G/A)ATC(T/A)GATAA-3' of target promoters in an iron- and zinc-dependent manner. Regulation occurs via direct binding of iron ions. Iron acquisition regulation is critical for survival under both iron-limiting conditions (to acquire essential iron) and iron-replete conditions (to limit iron toxicity). SRE1 targets include genes encoding a number of key iron-regulated factors such as those involved in siderophore biosynthesis, presumed ferric reductase activity, iron-responsive transcriptional regulation, oxidative stress response, as well as genes encoding a number of putative oxidoreductases, metabolic and mitochondrial enzymes, superoxide dismutase, and genes previously identified as induced during nitrosative stress. The sequence is that of GATA-type transcription factor SRE1 from Ajellomyces capsulatus (Darling's disease fungus).